Consider the following 378-residue polypeptide: MTINTKNIVVVGAGVFGVSVANHLYRELGGTYAIKLVTASNYVYFLPSAVRLTVSKDYTKSILPLKNVLDSGIEVIKDTAASFDDKEVVLGSDRAIKFDILVLATGSKWADPIGSTYTFGDNYKEYFEREASRISDADHILFLGGGFVNCELAGELLFKYLEEIRSGKKRISIIHNSDKLLPDSGLYNDTLRKNVTDYLSKNGITLYLNTVGASLDTSPKRIFLGEGSSKYIDADLIYRGVGISPNVPVNSISDLCDKKGFIQVEKNFRVKAVEAGNVFAIGDVTNFRYHGLVKRDNWVDVLTRNVISSLQEGTEASLVDADCLETGHAPSGVSLGPNAGFGQFPLPLLGTINIPSFLISRAKSKNLFSDKMEPLFKK.

Residues Asn-7–Tyr-25 form a helical membrane-spanning segment. FAD-binding positions include Gly-12–Phe-16, Arg-51, Lys-56, and Asp-283.

It belongs to the FAD-dependent oxidoreductase family. FAD is required as a cofactor.

The protein localises to the mitochondrion outer membrane. It localises to the nucleus. Functionally, putative FAD-dependent oxidoreductase involved in the resistance to cercosporin and other singlet oxygen-generating photosensitizers. Translocates from mitochondria to the nucleus under apoptotic conditions, where it degrades DNA and induces apoptosis. The polypeptide is Apoptosis-inducing factor 1 (AIF1) (Saccharomyces cerevisiae (strain ATCC 204508 / S288c) (Baker's yeast)).